Reading from the N-terminus, the 445-residue chain is Phosphoglucosamine mutase (445 aa).

Catalysis depends on Ser101, which acts as the Phosphoserine intermediate. Mg(2+)-binding residues include Ser101, Asp240, Asp242, and Asp244. A Phosphoserine modification is found at Ser101.

The protein belongs to the phosphohexose mutase family. The cofactor is Mg(2+). Post-translationally, activated by phosphorylation.

The enzyme catalyses alpha-D-glucosamine 1-phosphate = D-glucosamine 6-phosphate. Its function is as follows. Catalyzes the conversion of glucosamine-6-phosphate to glucosamine-1-phosphate. This is Phosphoglucosamine mutase from Pseudomonas fluorescens (strain SBW25).